Reading from the N-terminus, the 531-residue chain is MKVKRPILLAILDGWGLAEPDKGNAVDNANMIFVKQLKQTYPWLKAHASGKWVGLPENQMGNSEVGHIHLGAGRINLESLAKLNHETKTNNIAKNDEIVKTFEYVKKNNSALHLMGLFSNGGVHSHFDHMIAIYKAAIVYGITNIKFDLITDGRDTKPKLAYDFIKNLLELIKQNNNIGIISSVSGRYYAMDRDKRFDRSRIAYNAIVNRNNVRSFTNILDYIQQEYMINHDDEMIIPAFNQDDFNGNLKANDAIIMTNFRPDRAIQISSILTNKNYIAWQSEAFSDAEFIGDKIRFVSMMKYSDSVTSPHIAYPPKPLTNTLGQYLSKLGLKQLRIAETEKIAHVTFFFDGGNDYFKNGLAKNDEITLANAYIDLIPSAKVATYDLKPQMSAVEITDKLLEEIKKDEFDFIVLNFANCDMVGHTGNNKATEIACKTLDDQLKRIHDEFVLKHNGIMVITADHGNAEIMIDKDDQVNKKHTTSLVPIIITDKNIKLKQNDPAIAKVAPTILDLMNIEIPKEMELESMIDHN.

Mn(2+) is bound by residues Asp-13 and Ser-63. The active-site Phosphoserine intermediate is the Ser-63. Substrate is bound by residues His-124, 154–155 (RD), Arg-187, Arg-193, 261–264 (RPDR), and Lys-342. Mn(2+)-binding residues include Asp-420, His-424, Asp-462, His-463, and His-480.

It belongs to the BPG-independent phosphoglycerate mutase family. In terms of assembly, monomer. Mn(2+) serves as cofactor.

It catalyses the reaction (2R)-2-phosphoglycerate = (2R)-3-phosphoglycerate. It participates in carbohydrate degradation; glycolysis; pyruvate from D-glyceraldehyde 3-phosphate: step 3/5. Catalyzes the interconversion of 2-phosphoglycerate and 3-phosphoglycerate. This Mycoplasma capricolum subsp. capricolum (strain California kid / ATCC 27343 / NCTC 10154) protein is 2,3-bisphosphoglycerate-independent phosphoglycerate mutase.